The following is a 480-amino-acid chain: Caspase-8 (480 aa).

Residues 1-218 (MDFQSCLYAI…ELCDSPREQD (218 aa)) constitute a propeptide that is removed on maturation. 2 consecutive DED domains span residues 3–80 (FQSC…NFLD) and 101–177 (YRVM…KIED). Residues Ser-188 and Ser-213 each carry the phosphoserine modification. Lys-226 carries the N6-acetyllysine modification. The active site involves His-319. Tyr-336 carries the phosphotyrosine modification. Residue Cys-362 is part of the active site. A propeptide spanning residues 377–387 (FEQQNHTLEVD) is cleaved from the precursor. Ser-389 is modified (phosphoserine; by CDK1).

The protein belongs to the peptidase C14A family. Heterotetramer that consists of two anti-parallel arranged heterodimers, each one formed by a 18 kDa (p18) and a 10 kDa (p10) subunit. Component of the death-induced signaling complex (DISC) composed of cell surface receptor FAS/CD95 or TNFRSF1A, adapter protein FADD and the CASP8 protease; recruitment of CASP8 to the complex is required for processing of CASP8 into the p18 and p10 subunits. Component of the AIM2 PANoptosome complex, a multiprotein complex that drives inflammatory cell death (PANoptosis). Interacts with CFLAR and PEA15. Interacts with RFFL and RNF34; negatively regulate CASP8 through proteasomal degradation. Interacts with TNFAIP8L2. Interacts with CASP8AP2. Interacts with NOL3; decreases CASP8 activity in a mitochondria localization- and phosphorylation-dependent manner and this interaction is dissociated by calcium. Interacts with UBR2. Interacts with RIPK1. Interacts with stimulated TNFRSF10B; this interaction is followed by CASP8 proteolytic cleavage and activation. Generation of the subunits requires association with the death-inducing signaling complex (DISC), whereas additional processing is likely due to the autocatalytic activity of the activated protease. GZMB and CASP10 can be involved in these processing events. Post-translationally, (Microbial infection) Proteolytically cleaved by the cowpox virus CRMA death inhibitory protein. In terms of processing, phosphorylation on Ser-389 during mitosis by CDK1 inhibits activation by proteolysis and prevents apoptosis. This phosphorylation occurs in cancer cell lines, as well as in primary breast tissues and lymphocytes. As to expression, expressed in a wide variety of tissues. Highest expression in spleen, thymus, lung, liver and kidney. Lower expression in heart, brain, testis and skeletal muscle.

Its subcellular location is the cytoplasm. The protein localises to the nucleus. The enzyme catalyses Strict requirement for Asp at position P1 and has a preferred cleavage sequence of (Leu/Asp/Val)-Glu-Thr-Asp-|-(Gly/Ser/Ala).. CASP8 activity is restricted by RIPK1. Its activity is regulated as follows. (Microbial infection) Inhibited by baculovirus p35 protein P35. Its function is as follows. Thiol protease that plays a key role in programmed cell death by acting as a molecular switch for apoptosis, necroptosis and pyroptosis, and is required to prevent tissue damage during embryonic development and adulthood. Initiator protease that induces extrinsic apoptosis by mediating cleavage and activation of effector caspases responsible for FAS/CD95-mediated and TNFRSF1A-induced cell death. Cleaves and activates effector caspases CASP3, CASP4, CASP6, CASP7, CASP9 and CASP10. Binding to the adapter molecule FADD recruits it to either receptor FAS/CD95 or TNFRSF1A. The resulting aggregate called the death-inducing signaling complex (DISC) performs CASP8 proteolytic activation. The active dimeric enzyme is then liberated from the DISC and free to activate downstream apoptotic proteases. Proteolytic fragments of the N-terminal propeptide (termed CAP3, CAP5 and CAP6) are likely retained in the DISC. In addition to extrinsic apoptosis, also acts as a negative regulator of necroptosis: acts by cleaving RIPK1 at 'Asp-325', which is crucial to inhibit RIPK1 kinase activity, limiting TNF-induced apoptosis, necroptosis and inflammatory response. Also able to initiate pyroptosis by mediating cleavage and activation of gasdermin-C and -D (GSDMC and GSDMD, respectively): gasdermin cleavage promotes release of the N-terminal moiety that binds to membranes and forms pores, triggering pyroptosis. Initiates pyroptosis following inactivation of MAP3K7/TAK1. Also acts as a regulator of innate immunity by mediating cleavage and inactivation of N4BP1 downstream of TLR3 or TLR4, thereby promoting cytokine production. May participate in the Granzyme B (GZMB) cell death pathways. Cleaves PARP1 and PARP2. This Mus musculus (Mouse) protein is Caspase-8.